We begin with the raw amino-acid sequence, 398 residues long: Lysophospholipid acyltransferase LPEAT1 (398 aa).

Residues 1 to 24 are disordered; sequence MESELKDLNSNSNPPSSKEDRPLL. Position 28 is a phosphoserine (Ser28). The helical transmembrane segment at 66–86 threads the bilayer; the sequence is LAVALVTLVPLRFLLSMSILL. The segment at 158 to 185 is disordered; it reads RDSDMDSNPKTTSTEINQKGEAATEEPE. A compositionally biased stretch (polar residues) spans 163–174; it reads DSNPKTTSTEIN. Residues 194–199 carry the HXXXXD motif motif; sequence HVSYLD.

The protein belongs to the 1-acyl-sn-glycerol-3-phosphate acyltransferase family.

It is found in the endoplasmic reticulum membrane. The catalysed reaction is a 1-acyl-sn-glycero-3-phosphoethanolamine + an acyl-CoA = a 1,2-diacyl-sn-glycero-3-phosphoethanolamine + CoA. It catalyses the reaction a 1-acyl-sn-glycero-3-phosphate + an acyl-CoA = a 1,2-diacyl-sn-glycero-3-phosphate + CoA. It carries out the reaction a 1-acyl-sn-glycero-3-phosphocholine + an acyl-CoA = a 1,2-diacyl-sn-glycero-3-phosphocholine + CoA. The enzyme catalyses a 1-acyl-sn-glycero-3-phospho-L-serine + an acyl-CoA = a 1,2-diacyl-sn-glycero-3-phospho-L-serine + CoA. Its pathway is lipid metabolism; phospholipid metabolism. In terms of biological role, possesses acyl-CoA-dependent lysophospholipid acyltransferase activity with a subset of lysophospholipids as substrates. Exhibits strong acylation activity on lysophosphatidylethanolamine (LPE) and lysophosphatidate (LPA), and lower activity on lysophosphatidylcholine (LPC) and lysophosphatidylserine (LPS). Exhibits acylation activity on both LPE and LPC. Has a preference for 18:1-LPE over 16:0-LPE as acceptor. Palmitoyl-CoA (16:0-CoA) is a better acyl donor than oleoyl-CoA (18:1-CoA). Among several different acyl-CoA species the best acyl donor is palmitoyl-CoA (16:0-CoA). Activity is calcium-independent. Its activity is essential for maintaining adequate levels of phosphatidylethanolamine (PE), LPE and LPC in the cells, which is crucial for plant growth regulation. The polypeptide is Lysophospholipid acyltransferase LPEAT1 (Arabidopsis thaliana (Mouse-ear cress)).